A 133-amino-acid polypeptide reads, in one-letter code: UPF0344 protein SE_0666 (133 aa).

4 helical membrane passes run 1-21 (MLHV…ATYL), 42-62 (LFML…FMAA), 71-91 (MLLT…EISI), and 103-123 (FFWI…ILPW).

It belongs to the UPF0344 family.

The protein localises to the cell membrane. The chain is UPF0344 protein SE_0666 from Staphylococcus epidermidis (strain ATCC 12228 / FDA PCI 1200).